A 1011-amino-acid polypeptide reads, in one-letter code: DNA-directed RNA polymerase 2, chloroplastic/mitochondrial (1011 aa).

The interval Lys-307–Gln-326 is disordered. Catalysis depends on residues Asp-712, Lys-787, and Asp-944.

This sequence belongs to the phage and mitochondrial RNA polymerase family. In terms of assembly, interacts with NIP1 and NIP2.

It localises to the plastid. The protein localises to the chloroplast. Its subcellular location is the mitochondrion. The enzyme catalyses RNA(n) + a ribonucleoside 5'-triphosphate = RNA(n+1) + diphosphate. DNA-dependent RNA polymerase catalyzes the transcription of DNA into RNA using the four ribonucleoside triphosphates as substrates. This Arabidopsis thaliana (Mouse-ear cress) protein is DNA-directed RNA polymerase 2, chloroplastic/mitochondrial (RPOT2).